The sequence spans 748 residues: Putative pre-mRNA-splicing factor ATP-dependent RNA helicase DHX32 (748 aa).

The Helicase ATP-binding domain occupies 74–240; sequence LEHLAHNQIV…YGNAPLVEAE (167 aa). Residue 87–94 participates in ATP binding; that stretch reads AGPKSGKS. A Helicase C-terminal domain is found at 263–439; it reads RLLFEIHHTK…SMVLFLKRMD (177 aa). The disordered stretch occupies residues 706–748; the sequence is SETKDLLQQDQTPDTPPTEEPREEEPLHEANDEGTAEQRCIIQ.

Belongs to the DEAD box helicase family. DEAH subfamily.

Its subcellular location is the nucleus. The protein localises to the mitochondrion. The catalysed reaction is ATP + H2O = ADP + phosphate + H(+). This is Putative pre-mRNA-splicing factor ATP-dependent RNA helicase DHX32 (dhx32) from Xenopus laevis (African clawed frog).